The sequence spans 141 residues: Nucleoside diphosphate kinase (141 aa).

The ATP site is built by Lys11, Phe59, Arg87, Thr93, Arg104, and Asn114. Residue His117 is the Pros-phosphohistidine intermediate of the active site.

It belongs to the NDK family. As to quaternary structure, homotetramer. Mg(2+) serves as cofactor.

It is found in the cytoplasm. It carries out the reaction a 2'-deoxyribonucleoside 5'-diphosphate + ATP = a 2'-deoxyribonucleoside 5'-triphosphate + ADP. The enzyme catalyses a ribonucleoside 5'-diphosphate + ATP = a ribonucleoside 5'-triphosphate + ADP. Its function is as follows. Major role in the synthesis of nucleoside triphosphates other than ATP. The ATP gamma phosphate is transferred to the NDP beta phosphate via a ping-pong mechanism, using a phosphorylated active-site intermediate. The sequence is that of Nucleoside diphosphate kinase from Legionella pneumophila subsp. pneumophila (strain Philadelphia 1 / ATCC 33152 / DSM 7513).